Consider the following 37-residue polypeptide: Somatostatin-37 (37 aa).

Residues 1–2 constitute a propeptide that is removed on maturation; sequence AL. Cys26 and Cys37 are joined by a disulfide.

Belongs to the somatostatin family.

It localises to the secreted. Functionally, somatostatin inhibits the release of somatotropin. This chain is Somatostatin-37 (sst), found in Petromyzon marinus (Sea lamprey).